The sequence spans 263 residues: Small ribosomal subunit protein uS2 (263 aa).

The protein belongs to the universal ribosomal protein uS2 family.

The polypeptide is Small ribosomal subunit protein uS2 (Roseiflexus castenholzii (strain DSM 13941 / HLO8)).